The primary structure comprises 361 residues: Phospho-N-acetylmuramoyl-pentapeptide-transferase (361 aa).

10 helical membrane passes run 25–45, 73–93, 97–117, 134–154, 168–188, 200–220, 237–257, 264–284, 289–309, and 338–358; these read RAVLAALTALTISFIVGPAVI, TMGGALILVSVAVTTLLWADL, YVWLALMTLLGFGVIGWVDDW, YFWQSAIGLVVAVYLWQTASL, ATFGLSAAAFIALTYFVIVGA, GLAILPTVMVASALAIFAYVA, AGELAIFCAAMAGAGLAFLWF, VFMGDVGALALGAALGVVAVV, IILFIMCGVFVMETLSVMIQV, and QVVVRFWIISMMLVLIGLSSL.

It belongs to the glycosyltransferase 4 family. MraY subfamily. Mg(2+) serves as cofactor.

The protein resides in the cell inner membrane. The enzyme catalyses UDP-N-acetyl-alpha-D-muramoyl-L-alanyl-gamma-D-glutamyl-meso-2,6-diaminopimeloyl-D-alanyl-D-alanine + di-trans,octa-cis-undecaprenyl phosphate = di-trans,octa-cis-undecaprenyl diphospho-N-acetyl-alpha-D-muramoyl-L-alanyl-D-glutamyl-meso-2,6-diaminopimeloyl-D-alanyl-D-alanine + UMP. Its pathway is cell wall biogenesis; peptidoglycan biosynthesis. In terms of biological role, catalyzes the initial step of the lipid cycle reactions in the biosynthesis of the cell wall peptidoglycan: transfers peptidoglycan precursor phospho-MurNAc-pentapeptide from UDP-MurNAc-pentapeptide onto the lipid carrier undecaprenyl phosphate, yielding undecaprenyl-pyrophosphoryl-MurNAc-pentapeptide, known as lipid I. This is Phospho-N-acetylmuramoyl-pentapeptide-transferase from Thiobacillus denitrificans (strain ATCC 25259 / T1).